A 734-amino-acid polypeptide reads, in one-letter code: Photosystem I P700 chlorophyll a apoprotein A2 (734 aa).

8 helical membrane passes run Ile46–Ala69, Leu135–Gln158, Leu175–Ile199, Ile273–Tyr291, Ile330–Tyr353, Ala369–Ile395, Ala417–His439, and Phe517–Val535. [4Fe-4S] cluster contacts are provided by Cys559 and Cys568. 2 consecutive transmembrane segments (helical) span residues Ala575–Trp596 and Leu643–Ile665. 3 residues coordinate chlorophyll a: His654, Met662, and Tyr670. Trp671 contacts phylloquinone. Residues Leu707–Ala727 form a helical membrane-spanning segment.

It belongs to the PsaA/PsaB family. The PsaA/B heterodimer binds the P700 chlorophyll special pair and subsequent electron acceptors. PSI consists of a core antenna complex that captures photons, and an electron transfer chain that converts photonic excitation into a charge separation. The eukaryotic PSI reaction center is composed of at least 11 subunits. It depends on P700 is a chlorophyll a/chlorophyll a' dimer, A0 is one or more chlorophyll a, A1 is one or both phylloquinones and FX is a shared 4Fe-4S iron-sulfur center. as a cofactor.

Its subcellular location is the plastid. It is found in the chloroplast thylakoid membrane. It carries out the reaction reduced [plastocyanin] + hnu + oxidized [2Fe-2S]-[ferredoxin] = oxidized [plastocyanin] + reduced [2Fe-2S]-[ferredoxin]. PsaA and PsaB bind P700, the primary electron donor of photosystem I (PSI), as well as the electron acceptors A0, A1 and FX. PSI is a plastocyanin-ferredoxin oxidoreductase, converting photonic excitation into a charge separation, which transfers an electron from the donor P700 chlorophyll pair to the spectroscopically characterized acceptors A0, A1, FX, FA and FB in turn. Oxidized P700 is reduced on the lumenal side of the thylakoid membrane by plastocyanin. The polypeptide is Photosystem I P700 chlorophyll a apoprotein A2 (Aethionema grandiflorum (Persian stone-cress)).